A 92-amino-acid chain; its full sequence is MPRSLKKGPFIDLHLLKKVEKAVESGDKKPVKTWSRRSMIIPQMIGLTIAVHNGRQHVPVFVSEEMIGHKLGEFAPTRTYRGHAADKKAKKR.

Belongs to the universal ribosomal protein uS19 family.

Its function is as follows. Protein S19 forms a complex with S13 that binds strongly to the 16S ribosomal RNA. In Photobacterium profundum (strain SS9), this protein is Small ribosomal subunit protein uS19.